A 189-amino-acid polypeptide reads, in one-letter code: Ribosome maturation factor RimP (189 aa).

Belongs to the RimP family.

The protein resides in the cytoplasm. Functionally, required for maturation of 30S ribosomal subunits. The chain is Ribosome maturation factor RimP from Corynebacterium kroppenstedtii (strain DSM 44385 / JCM 11950 / CIP 105744 / CCUG 35717).